The primary structure comprises 661 residues: Heme transporter BhuA (661 aa).

The N-terminal stretch at 1-23 (MKFTRTLVLVSTSLLATVATSQA) is a signal peptide. The region spanning 48-159 (KDNIEATGGT…AAGAIRYETV (112 aa)) is the TBDR plug domain. Positions 170–661 (TFGARIIGSY…TFTFQTAFKF (492 aa)) constitute a TBDR beta-barrel domain.

Belongs to the TonB-dependent receptor family.

It is found in the cell outer membrane. Heme transporter playing an important role in stationary-phase iron acquisition and required for maintenance of chronic infection in mice. The protein is Heme transporter BhuA (bhuA) of Brucella abortus (strain 2308).